A 735-amino-acid polypeptide reads, in one-letter code: ATP-dependent DNA helicase Hel308 (735 aa).

ATP is bound by residues Gln32 and 50–57 (APTGSGKT). One can recognise a Helicase ATP-binding domain in the interval 37–201 (QAGVEKGENL…WIGGKIVESS (165 aa)). The short motif at 146-149 (DEIH) is the DEAH box element. Positions 235 to 431 (DLDLAAEAIE…GLRGLRHFIL (197 aa)) constitute a Helicase C-terminal domain.

This sequence belongs to the helicase family. Hel308 subfamily. In terms of assembly, monomer.

The catalysed reaction is Couples ATP hydrolysis with the unwinding of duplex DNA by translocating in the 3'-5' direction.. It carries out the reaction ATP + H2O = ADP + phosphate + H(+). Its function is as follows. DNA-dependent ATPase and 3'-5' DNA helicase that may be involved in repair of stalled replication forks. This chain is ATP-dependent DNA helicase Hel308, found in Aeropyrum pernix (strain ATCC 700893 / DSM 11879 / JCM 9820 / NBRC 100138 / K1).